Reading from the N-terminus, the 551-residue chain is Solute carrier family 22 member 13 (551 aa).

Over 1 to 20 (MAQFVQVLAEIGDFGRFQIQ) the chain is Cytoplasmic. Residues 21-41 (LLILLCVLNFLSPFYFFAHVF) form a helical membrane-spanning segment. The Extracellular segment spans residues 42–138 (MVLDEPHHCA…LVCDRKHLKD (97 aa)). N-linked (GlcNAc...) asparagine glycans are attached at residues Asn-57, Asn-61, Asn-92, and Asn-104. Residues 139–159 (TTQSVFMAGLLVGTLMFGPLC) traverse the membrane as a helical segment. Residues 160 to 167 (DRIGRKAT) lie on the Cytoplasmic side of the membrane. Residues 168-188 (ILAQLLLFTLIGLATAFVPSF) traverse the membrane as a helical segment. Residues 189–195 (ELYMALR) lie on the Extracellular side of the membrane. A helical membrane pass occupies residues 196-216 (FAVATAVAGLSFSNVTLLTEW). Over 217-224 (VGPSWRTQ) the chain is Cytoplasmic. The helical transmembrane segment at 225–245 (AVVLAQCNFSLGQMVLAGLAY) threads the bilayer. Over 246–251 (GFRNWR) the chain is Extracellular. A helical membrane pass occupies residues 252–272 (LLQITGTAPGLLLFFYFWALP). Residues 273–332 (ESARWLLTRGRMDEAIQLIQKAASVNRRKLSPELMNQLVPEKTGPSGNALDLFRHPQLRK) lie on the Cytoplasmic side of the membrane. A helical membrane pass occupies residues 333-353 (VTLIIFCVWFVDSLGYYGLSL). Gln-354 is a topological domain (extracellular). A helical membrane pass occupies residues 355-375 (VGDFGLDVYLTQLIFGAVEVP). At 376–397 (ARCSSIFMMQRFGRKWSQLGTL) the chain is on the cytoplasmic side. A helical transmembrane segment spans residues 398–418 (VLGGLMCIIIIFIPADLPVVV). Residues 419 to 427 (TMLAVVGKM) are Extracellular-facing. Residues 428–448 (ATAAAFTISYVYSAELFPTIL) traverse the membrane as a helical segment. The Cytoplasmic portion of the chain corresponds to 449–452 (RQTG). The chain crosses the membrane as a helical span at residues 453 to 473 (MGLVGIFSRIGGILTPLVILL). At 474 to 478 (GEYHA) the chain is on the extracellular side. Residues 479 to 499 (ALPMLIYGSLPIVAGLLCTLL) traverse the membrane as a helical segment. The Cytoplasmic portion of the chain corresponds to 500-551 (PETHGQGLKDTLQDLELGPHPRSPKSVPSEKETEAKGRTSSPGVAFVSSTYF). The tract at residues 511–551 (LQDLELGPHPRSPKSVPSEKETEAKGRTSSPGVAFVSSTYF) is disordered. A compositionally biased stretch (basic and acidic residues) spans 527–536 (PSEKETEAKG). Over residues 537–551 (RTSSPGVAFVSSTYF) the composition is skewed to polar residues.

The protein belongs to the major facilitator (TC 2.A.1) superfamily. Organic cation transporter (TC 2.A.1.19) family. Glycosylated. As to expression, ubiquitous. Highly expressed in kidneys and to a weaker extent in brain, heart, and intestine. In kidneys, expressed in proximal convoluted tubule. In kidneys, also expressed in cortical collecting duct, whereas glomerulus and thick ascending limb exhibit no expression.

Its subcellular location is the apical cell membrane. The enzyme catalyses urate(out) + (S)-lactate(in) = urate(in) + (S)-lactate(out). The catalysed reaction is urate(out) + succinate(in) = urate(in) + succinate(out). It catalyses the reaction urate(out) + glutathione(in) = urate(in) + glutathione(out). It carries out the reaction nicotinate(in) + urate(out) = nicotinate(out) + urate(in). The enzyme catalyses orotate(out) + a carboxylate(in) = orotate(in) + a carboxylate(out). Functionally, anion antiporter that mediates the transport of urate, orotate and nicotinate in exchange for organic or inorganic anions. Translocates urate and orotate across the apical membrane of proximal tubule epithelial cells and involved in urate renal reabsorption. Possibly involved in orotate renal reabsorption and nicotinate intestinal reabsorption. Mediates urate uptake by an exchange with organic anions such as (S)-lactate, succinate, glutathione and nicotinate. Urate and orotate transports are Cl(-)-dependent. Shows similar transport characteristics as the urate/orotate renal antiporter SLC22A12/URAT1 and may act as a compensator of SLC22A12/URAT1 in certain conditions. In Homo sapiens (Human), this protein is Solute carrier family 22 member 13.